The primary structure comprises 775 residues: MLRYARTVRFSQVGNSVRTSSGSFGPIRTIFISSHDRKSPSHSLSPISNLPNHNDSSTERARKTLDDDFQRKIKYDELKTRKRIEDLRALTKKVSQLVKQKQELSKIAKIPVPSDEIKKLKSVEDVVKVTKSQHVATVRTNIPEPETVTTHIEKEESEFVMEQNAFIVPATPIPEEIAKRLGLALRYLVSETNQNWTLVLDQLKADRGFKDLPYTTVVDFLTKIPASELQKVIPKVDQLLKEAKIPKTAKILNLYIASLASGSAVPNQVIQILENYCKRIRKLKKGKLPKRTCEVMVQAYGKNGNINRIQDLLSEMKLHKIEISGMALTNILATCVYKARDHKQAVEIFDTMRFQKEVYKPGTRAYQDIIVSYVNNDDIEKAIDIYREMITEKIEPNQQIMVALARGCASREAFKFKSWDFIFEINRNNWTPTLPTYEYMLYLSSRDGDLALTRALYSRLLKDNTVSLRSFNFLLLAYSKARLSDDLGEPFLINADEKGRKFRFNVIDRSGISDPTNQFPFLPFNELTTKEQIMAESSAIWAHACLNNSELINSESTTSYLNIASERGTLSDFIDRMEGSTFLDEKINNVLSGVVIEEPDVVVETTDFLTQKSSAHEKYDETSIVKSPILKSIQSKRTPRVSLTYVVALKAAGKFNNYNFANRIWQERGKFRKTETFKKLPRTEKDKLDFQFATQMVRTLTELNLLEDALAVLKSTEYQFRWTWKELDVLKSAAIRQGNTNVAQTVRSIARRAQLTYEGKIRRKDYKRYVMQRGY.

The transit peptide at 1 to 18 directs the protein to the mitochondrion; sequence MLRYARTVRFSQVGNSVR. The tract at residues 35 to 65 is disordered; sequence HDRKSPSHSLSPISNLPNHNDSSTERARKTL. Over residues 41-55 the composition is skewed to polar residues; it reads SHSLSPISNLPNHND. Residues 56–65 are compositionally biased toward basic and acidic residues; it reads SSTERARKTL. PPR repeat units lie at residues 289–323, 324–355, 362–396, 397–432, and 433–467; these read PKRT…KIEI, SGMA…MRFQ, GTRA…KIEP, NQQI…NWTP, and TLPT…NTVS.

The protein belongs to the CCM1 family. In terms of assembly, binds to mitochondrial small subunit 15S rRNA.

The protein localises to the mitochondrion. Regulates mitochondrial small subunit maturation by controlling 15S rRNA 5'-end processing. Localizes to the 5' precursor of the 15S rRNA in a position that is subsequently occupied by mS47 in the mature yeast mtSSU. Uses structure and sequence-specific RNA recognition, binding to a single-stranded region of the precursor and specifically recognizing bases -6 to -1. The exchange of Ccm1 for mS47 is coupled to the irreversible removal of precursor rRNA that is accompanied by conformational changes of the mitoribosomal proteins uS5m and mS26. These conformational changes signal completion of 5'-end rRNA processing through protection of the mature 5'-end of the 15S rRNA and stabilization of mS47. The removal of the 5' precursor together with the dissociation of Ccm1 may be catalyzed by the 5'-3' exoribonuclease Pet127. Involved in the specific removal of group I introns in mitochondrial encoded transcripts. The polypeptide is Mitochondrial 15S rRNA processing factor CCM1 (CCM1) (Scheffersomyces stipitis (strain ATCC 58785 / CBS 6054 / NBRC 10063 / NRRL Y-11545) (Yeast)).